The sequence spans 452 residues: Biotin carboxylase (452 aa).

The Biotin carboxylation domain maps to 1-445 (MFKKVLIANR…TTAFVTNHLK (445 aa)). ATP-binding positions include Lys-116, Lys-158, 164-165 (GG), 200-203 (EKAV), His-208, and His-235. The ATP-grasp domain occupies 120 to 317 (RTAMQTAGVP…LVEWQLLIAA (198 aa)). Lys-237 contacts hydrogencarbonate. ATP-binding residues include Glu-275 and Glu-288. Residues Glu-275, Glu-288, and Asn-290 each contribute to the Mg(2+) site. Mn(2+)-binding residues include Glu-275, Glu-288, and Asn-290. Hydrogencarbonate-binding residues include Arg-292, Val-295, and Arg-338. The active site involves Arg-292. Residue Arg-338 participates in biotin binding.

As to quaternary structure, acetyl-CoA carboxylase is a heterohexamer of biotin carboxyl carrier protein, biotin carboxylase and the two subunits of carboxyl transferase in a 2:2 complex. It depends on Mg(2+) as a cofactor. Mn(2+) is required as a cofactor.

It catalyses the reaction N(6)-biotinyl-L-lysyl-[protein] + hydrogencarbonate + ATP = N(6)-carboxybiotinyl-L-lysyl-[protein] + ADP + phosphate + H(+). Its pathway is lipid metabolism; malonyl-CoA biosynthesis; malonyl-CoA from acetyl-CoA: step 1/1. In terms of biological role, this protein is a component of the acetyl coenzyme A carboxylase complex; first, biotin carboxylase catalyzes the carboxylation of the carrier protein and then the transcarboxylase transfers the carboxyl group to form malonyl-CoA. The sequence is that of Biotin carboxylase (accC) from Halalkalibacterium halodurans (strain ATCC BAA-125 / DSM 18197 / FERM 7344 / JCM 9153 / C-125) (Bacillus halodurans).